A 635-amino-acid chain; its full sequence is MIKITLKDGSVREYAVGTTVLEVAKSISQGLAREALAGKVNGKIVDLEYPLKEDAALELLTFNDEEGKTVYRHSTAHVLAQAVKRLFPDAKLAIGPAIQDGYYYDFDVEQPFTPAQLERIEEEMNKIIKEDIPFKRVELSREEALEHFKKQDEIYKIELITDLPEDAVISCYQQGDFDDLCAGPHVPSTGRLKSLKLMSIAGAYWRGSEKNKMLQRIYGTSFPKKAMLDEHLFRIEEAKRRDHRKLGQELDLFSIQEEGPGFPFFHPKGMVLRNELENFWRQEHKKRGYQEIRTPIILNRSMWEQSGHWAHYKDNMYFTKIDEADYAVKPMNCPGSILVYKTRMHSYRDLPLRWGELGLVHRHELSGALHGLMRVRCFTQDDAHIFMLPSQIKDEIIGVIDLFDYFYNTFGLNYHVELSTRPEKSMGSDEMWEVATNSLRDALEAKKMDYKVNEGDGAFYGPKIDFHLTDSLGRTWQCGTIQLDFQMPERFNLNYVGEDGQKHRPVMIHRVVFGSIERFIGILTEHFAGAFPVWLAPVQVKVLPITDRHHEYARELVKRLQGLDIRVELDARNEKINYKIREAQTQKIPYMLVIGDREMEQGAVAVRERGKGDVGAISVGDFIKKIEDDIQNKTI.

Residues 1–61 enclose the TGS domain; sequence MIKITLKDGS…KEDAALELLT (61 aa). The segment at 242 to 532 is catalytic; that stretch reads DHRKLGQELD…LTEHFAGAFP (291 aa). Zn(2+)-binding residues include Cys-333, His-384, and His-509.

Belongs to the class-II aminoacyl-tRNA synthetase family. In terms of assembly, homodimer. The cofactor is Zn(2+).

Its subcellular location is the cytoplasm. It catalyses the reaction tRNA(Thr) + L-threonine + ATP = L-threonyl-tRNA(Thr) + AMP + diphosphate + H(+). In terms of biological role, catalyzes the attachment of threonine to tRNA(Thr) in a two-step reaction: L-threonine is first activated by ATP to form Thr-AMP and then transferred to the acceptor end of tRNA(Thr). Also edits incorrectly charged L-seryl-tRNA(Thr). The polypeptide is Threonine--tRNA ligase (Desulforamulus reducens (strain ATCC BAA-1160 / DSM 100696 / MI-1) (Desulfotomaculum reducens)).